The sequence spans 145 residues: Peroxide operon regulator (145 aa).

A DNA-binding region spans residues 1–78 (MAAHELKEAL…SGLVKELTYG (78 aa)). Positions 96, 99, 136, and 139 each coordinate Zn(2+).

It belongs to the Fur family. In terms of assembly, homodimer. It depends on Mn(2+) as a cofactor. Requires Fe(2+) as cofactor. Zn(2+) serves as cofactor. Possibly oxidized on a cysteine residue; the Cys-SOH formed in response to oxidative signaling may rapidly react with a Cys-SH to form a disulfide bond, leading to the loss of metal ion and inactivation of repressor function. Oxidized PerR can be further reduced by thiol reductants and repressor activity restored.

It is found in the cytoplasm. Functionally, hydrogen and organic peroxide sensor. Represses the expression of a regulon of peroxide-inducible genes such as katA, ahpC, ahpF, the heme biosynthesis operon (hemAXCDBL), fur, perR, zosA and mrgA. The polypeptide is Peroxide operon regulator (perR) (Bacillus subtilis (strain 168)).